Reading from the N-terminus, the 388-residue chain is ATP phosphoribosyltransferase regulatory subunit (388 aa).

This sequence belongs to the class-II aminoacyl-tRNA synthetase family. HisZ subfamily. In terms of assembly, heteromultimer composed of HisG and HisZ subunits.

It is found in the cytoplasm. It functions in the pathway amino-acid biosynthesis; L-histidine biosynthesis; L-histidine from 5-phospho-alpha-D-ribose 1-diphosphate: step 1/9. In terms of biological role, required for the first step of histidine biosynthesis. May allow the feedback regulation of ATP phosphoribosyltransferase activity by histidine. In Acinetobacter baylyi (strain ATCC 33305 / BD413 / ADP1), this protein is ATP phosphoribosyltransferase regulatory subunit.